The primary structure comprises 747 residues: Sushi domain-containing protein 1 (747 aa).

The first 29 residues, 1–29 (MGRGPWDAGPSRRLLPLLLLLGLARGAAG), serve as a signal peptide directing secretion. Topologically, residues 30 to 721 (APGPDGLDVC…WAQVKDSSLM (692 aa)) are extracellular. Residues 35 to 72 (GLDVCATCHEHATCQQREGKKICICNYGFVGNGRTQCV) form the EGF-like 1 domain. 5 disulfides stabilise this stretch: cysteine 39-cysteine 48, cysteine 42-cysteine 57, cysteine 59-cysteine 71, cysteine 77-cysteine 91, and cysteine 85-cysteine 100. Positions 73 to 112 (DKNECQFGATLVCGNHTSCHNTPGGFYCICLEGYRATNNN) constitute an EGF-like 2; calcium-binding domain. 2 N-linked (GlcNAc...) asparagine glycosylation sites follow: asparagine 87 and asparagine 112. The EGF-like 3; calcium-binding domain occupies 125–162 (DIDECEVSGLCRHGGRCVNTHGSFECYCMDGYLPRNGP). Intrachain disulfides connect cysteine 129-cysteine 141, cysteine 135-cysteine 150, cysteine 179-cysteine 221, cysteine 206-cysteine 234, cysteine 239-cysteine 281, and cysteine 266-cysteine 294. Sushi domains are found at residues 177 to 236 (IDCG…HCQE) and 237 to 296 (INCG…TCTE). Asparagine 193 carries an N-linked (GlcNAc...) asparagine glycan. An N-linked (GlcNAc...) asparagine glycan is attached at asparagine 253. Asparagine 348, asparagine 367, and asparagine 563 each carry an N-linked (GlcNAc...) asparagine glycan. A helical membrane pass occupies residues 722 to 742 (LLQMAGVGLGSLAVVIILTFL). The Cytoplasmic segment spans residues 743-747 (SFSAV).

It localises to the membrane. This chain is Sushi domain-containing protein 1 (SUSD1), found in Homo sapiens (Human).